The primary structure comprises 1370 residues: DNA-directed RNA polymerase subunit beta (1370 aa).

The protein belongs to the RNA polymerase beta chain family. The RNAP catalytic core consists of 2 alpha, 1 beta, 1 beta' and 1 omega subunit. When a sigma factor is associated with the core the holoenzyme is formed, which can initiate transcription.

The enzyme catalyses RNA(n) + a ribonucleoside 5'-triphosphate = RNA(n+1) + diphosphate. DNA-dependent RNA polymerase catalyzes the transcription of DNA into RNA using the four ribonucleoside triphosphates as substrates. The sequence is that of DNA-directed RNA polymerase subunit beta from Bordetella parapertussis (strain 12822 / ATCC BAA-587 / NCTC 13253).